Here is a 575-residue protein sequence, read N- to C-terminus: Phosphoenolpyruvate-protein phosphotransferase (575 aa).

The active-site Tele-phosphohistidine intermediate is the H189. 2 residues coordinate phosphoenolpyruvate: R296 and R332. 2 residues coordinate Mg(2+): E431 and D455. Residues 454–455 (ND) and R465 contribute to the phosphoenolpyruvate site. C502 acts as the Proton donor in catalysis.

It belongs to the PEP-utilizing enzyme family. Homodimer. Mg(2+) serves as cofactor.

It is found in the cytoplasm. It carries out the reaction L-histidyl-[protein] + phosphoenolpyruvate = N(pros)-phospho-L-histidyl-[protein] + pyruvate. General (non sugar-specific) component of the phosphoenolpyruvate-dependent sugar phosphotransferase system (sugar PTS). This major carbohydrate active-transport system catalyzes the phosphorylation of incoming sugar substrates concomitantly with their translocation across the cell membrane. Enzyme I transfers the phosphoryl group from phosphoenolpyruvate (PEP) to the phosphoryl carrier protein (HPr). The polypeptide is Phosphoenolpyruvate-protein phosphotransferase (ptsI) (Haemophilus influenzae (strain ATCC 51907 / DSM 11121 / KW20 / Rd)).